The primary structure comprises 338 residues: Acyl-CoA:acyl-CoA alkyltransferase (338 aa).

Residues H18 and D56 each coordinate Mn(2+). E97 acts as the Proton acceptor in catalysis. C123 functions as the Acyl-thioester intermediate in the catalytic mechanism.

Belongs to the thiolase-like superfamily. OleA family. As to quaternary structure, homodimer. Weakly associates with the OleBCD complex.

Its subcellular location is the cytoplasm. The enzyme catalyses a 1,2-saturated acyl-CoA + an acyl-CoA + H2O = an (R)-2-alkyl-3-oxoalkanoate + 2 CoA + H(+). With respect to regulation, inhibited by cerulenin. Its function is as follows. Involved in olefin biosynthesis. Catalyzes a non-decarboxylative head-to-head Claisen condensation of two acyl-CoA molecules, generating an (R)-2-alkyl-3-oxoalkanoate. Is active with fatty acyl-CoA substrates that ranged from C(8) to C(16) in length, and is the most active with palmitoyl-CoA and myristoyl-CoA. This Xanthomonas campestris pv. campestris (strain ATCC 33913 / DSM 3586 / NCPPB 528 / LMG 568 / P 25) protein is Acyl-CoA:acyl-CoA alkyltransferase.